The chain runs to 395 residues: Trans-2-enoyl-CoA reductase [NADH] (395 aa).

NAD(+) contacts are provided by residues 47–52, 73–74, 110–111, and 138–139; these read GASTGY, FE, DA, and LA. Residue Tyr-224 coordinates substrate. Tyr-234 acts as the Proton donor in catalysis. NAD(+) is bound by residues Lys-243 and 272–274; that span reads VVT.

The protein belongs to the TER reductase family. In terms of assembly, monomer.

It catalyses the reaction a 2,3-saturated acyl-CoA + NAD(+) = a (2E)-enoyl-CoA + NADH + H(+). The protein operates within lipid metabolism; fatty acid biosynthesis. Functionally, involved in the fatty acid synthesis (FAS II). Catalyzes the reduction of a carbon-carbon double bond in an enoyl moiety that is covalently linked to a coenzyme A (CoA). This Ruminiclostridium cellulolyticum (strain ATCC 35319 / DSM 5812 / JCM 6584 / H10) (Clostridium cellulolyticum) protein is Trans-2-enoyl-CoA reductase [NADH].